The following is a 155-amino-acid chain: Small ribosomal subunit protein uS7cz/uS7cy (155 aa).

Belongs to the universal ribosomal protein uS7 family. Part of the 30S ribosomal subunit.

The protein localises to the plastid. Its subcellular location is the chloroplast. One of the primary rRNA binding proteins, it binds directly to 16S rRNA where it nucleates assembly of the head domain of the 30S subunit. This is Small ribosomal subunit protein uS7cz/uS7cy (rps7-A) from Acorus calamus var. americanus (American sweet flag).